The following is a 319-amino-acid chain: Ribosomal RNA small subunit methyltransferase H (319 aa).

Residues 39–41 (GGH), D59, F83, D104, and Q111 each bind S-adenosyl-L-methionine.

This sequence belongs to the methyltransferase superfamily. RsmH family.

The protein resides in the cytoplasm. It carries out the reaction cytidine(1402) in 16S rRNA + S-adenosyl-L-methionine = N(4)-methylcytidine(1402) in 16S rRNA + S-adenosyl-L-homocysteine + H(+). Functionally, specifically methylates the N4 position of cytidine in position 1402 (C1402) of 16S rRNA. The chain is Ribosomal RNA small subunit methyltransferase H from Ralstonia nicotianae (strain ATCC BAA-1114 / GMI1000) (Ralstonia solanacearum).